Reading from the N-terminus, the 709-residue chain is Tyrosine-protein phosphatase cdc-14 (709 aa).

Residues 196–354 (DFNWIIPGKI…QKFCWSLSQS (159 aa)) form the Tyrosine-protein phosphatase domain. Residue C295 is the Phosphocysteine intermediate of the active site. The Nuclear localization signal motif lies at 366–371 (KRNVRR). The short motif at 372-381 (LVNQVDDINL) is the Nuclear export signal element. Disordered stretches follow at residues 403-541 (VQVQ…LTRT), 573-594 (RYLS…GTSP), and 628-661 (ESKP…PYPS). Residues 404-413 (QVQNGRSTAP) show a composition bias toward polar residues. Over residues 463 to 479 (TTSPNSSSSRRFVKSST) the composition is skewed to low complexity. 2 stretches are compositionally biased toward polar residues: residues 480-490 (PQMTVPSQAYL) and 501-521 (PSKN…TPNG). Positions 526 to 541 (RTRNSSGNTTSTLTRT) are enriched in low complexity. Residues 639–649 (PGTSKSTSSLK) are compositionally biased toward polar residues.

It belongs to the protein-tyrosine phosphatase family. Non-receptor class CDC14 subfamily.

The protein resides in the cytoplasm. The protein localises to the cytoskeleton. Its subcellular location is the microtubule organizing center. It is found in the centrosome. It localises to the spindle. The protein resides in the midbody. The protein localises to the nucleus. It catalyses the reaction O-phospho-L-tyrosyl-[protein] + H2O = L-tyrosyl-[protein] + phosphate. Inhibited by sodium orthovanadate. Weakly inhibited by sodium fluoride and okadaic acid. Its function is as follows. Protein phosphatase that negatively regulates the G1-to-S phase transition to inhibit the cell cycle and establish quiescence in cells of multiple lineages including vulval, hypodermal and intestinal. Promotes nuclear accumulation and activity of the cyclin-dependent kinase inhibitor cki-1 which leads to inhibition of G1 progression during vulval tissue development. Has been shown to not be required for cytokinesis. However, in the embryo, in a contrasting study, has been shown to act as a regulator of central spindle formation and cytokinesis, and may be required for localization of the spindle component zen-4, and its interacting partner air-2 at the spindle during late cell divisions. Functionally, main regulator of cell cycle arrest in vulval precursor cells. This chain is Tyrosine-protein phosphatase cdc-14, found in Caenorhabditis elegans.